Reading from the N-terminus, the 166-residue chain is Fer3-like protein (166 aa).

Residues 57–88 form a disordered region; sequence FEEGDPEEEECEVDQGDGEEEEEEERGRGVSL. Residues 60-80 show a composition bias toward acidic residues; it reads GDPEEEECEVDQGDGEEEEEE. The 53-residue stretch at 101–153 folds into the bHLH domain; it reads AQRQAANIRERKRMFNLNEAFDQLRRKVPTFAYEKRLSRIETLRLAIVYISFM.

Heterodimer with TCF3/E12. Interacts with the bHLH domain of TCF3/E12.

It is found in the nucleus. Transcription factor that binds to the E-box and functions as inhibitor of transcription. DNA binding requires dimerization with an E protein. Inhibits transcription activation by ASCL1/MASH1 by sequestering E proteins. The sequence is that of Fer3-like protein (FERD3L) from Homo sapiens (Human).